The following is a 522-amino-acid chain: DNA damage-binding protein cmr1 (522 aa).

Over residues 34–47 the composition is skewed to polar residues; it reads VFTPTLPNRATGSQ. Disordered stretches follow at residues 34 to 89 and 217 to 239; these read VFTP…KRKA and QEKP…DPVL. Positions 49 to 59 are enriched in basic residues; that stretch reads KTKKKPAPKKV. One copy of the WD 1 repeat lies at 182 to 223; the sequence is LTPERVYTMTFHPSETKPLIFAGDKMGHLGILDASQEKPTSV. Positions 226–236 are enriched in acidic residues; sequence EDEDEEDDDPD. WD repeat units lie at residues 244–284, 294–331, 336–376, 381–422, 445–488, and 491–522; these read PHTR…SVER, VPLS…QGSV, LSEK…RREP, EHQS…ASWK, GRWV…LAQL, and DGIT…CLWM.

The protein belongs to the WD repeat DDB2/WDR76 family.

Its function is as follows. DNA-binding protein that binds to both single- and double-stranded DNA. Binds preferentially to UV-damaged DNA. May be involved in DNA-metabolic processes. The polypeptide is DNA damage-binding protein cmr1 (Aspergillus oryzae (strain ATCC 42149 / RIB 40) (Yellow koji mold)).